A 300-amino-acid chain; its full sequence is MDAPSTTPHDAVFKQFLMHAETARDFLEIHLPVELRELCDLNTLHLESGSFIEESLKGHSTDVLYSVQMQGNPGYLHVVIEHQSKPDKKMAFRMMRYSIAAMHRHLEADHDKLPLVVPILFYQGEATPYPLSMCWFDMFYSPELARRVYNSPFPLVDITITPDDEIMQHRRIAILELLQKHIRQRDLMLLLEQLVTLIDEGYTSGSQLVAMQNYMLQRGHTEQADLFYGVLRDRETGGESMMTLAQWFEEKGIEKGIQQGRQEVSQEFAQRLLSKGMSREDVAEMANLPLAEIDKVINLI.

It belongs to the Rpn/YhgA-like nuclease family.

A low activity DNA endonuclease yielding 3'-hydroxyl ends. Upon expression enhances RecA-independent DNA recombination 2.9-fold, concomitantly reducing viability by 59% and inducing DNA damage as measured by induction of the SOS repair response. The sequence is that of Recombination-promoting nuclease RpnC from Escherichia coli (strain K12).